Here is an 80-residue protein sequence, read N- to C-terminus: Cell division activator CedA (80 aa).

It belongs to the CedA family.

Activates the cell division inhibited by chromosomal DNA over-replication. The sequence is that of Cell division activator CedA from Salmonella arizonae (strain ATCC BAA-731 / CDC346-86 / RSK2980).